The following is a 458-amino-acid chain: UDP-glycosyltransferase 76G1 (458 aa).

H25 (proton acceptor) is an active-site residue. H25 is a binding site for rebaudioside A. Position 25 (H25) interacts with rubusoside. N27 contacts UDP. D124 functions as the Charge relay in the catalytic mechanism. Rebaudioside A contacts are provided by residues 146 to 147 (TS) and H155. UDP is bound by residues S283, 338 to 339 (WV), and 356 to 364 (HSGWNSTLE). Rebaudioside A contacts are provided by residues W359 and 380 to 381 (DQ).

It belongs to the UDP-glycosyltransferase family. Monomer.

It catalyses the reaction steviolbioside + UDP-alpha-D-glucose = rebaudioside B + UDP + H(+). It carries out the reaction stevioside + UDP-alpha-D-glucose = rebaudioside A + UDP + H(+). The enzyme catalyses rebaudioside E + UDP-alpha-D-glucose = rebaudioside D + UDP + H(+). The catalysed reaction is rebaudioside D + UDP-alpha-D-glucose = rebaudioside M + UDP + H(+). Functionally, involved in the biosynthesis of steviol glycosides in leaves. Converts the di-glycoside steviolbioside to the tri-glycoside rebaudioside B. Converts the tri-glycoside stevioside to the tetra-glycoside rebaudioside A. Converts the tetra-glycoside rebaudioside E to the penta-glycoside rebaudioside D. Converts the penta-glycoside rebaudioside D to the hexa-glycoside rebaudioside M. Can glucosylate rubusoside and rebaudioside A in vitro. In Stevia rebaudiana (Stevia), this protein is UDP-glycosyltransferase 76G1.